Here is a 105-residue protein sequence, read N- to C-terminus: Co-chaperonin GroES (105 aa).

Belongs to the GroES chaperonin family. As to quaternary structure, heptamer of 7 subunits arranged in a ring. Interacts with the chaperonin GroEL.

It localises to the cytoplasm. Functionally, together with the chaperonin GroEL, plays an essential role in assisting protein folding. The GroEL-GroES system forms a nano-cage that allows encapsulation of the non-native substrate proteins and provides a physical environment optimized to promote and accelerate protein folding. GroES binds to the apical surface of the GroEL ring, thereby capping the opening of the GroEL channel. This is Co-chaperonin GroES from Methylovorus sp. (strain SS1 / DSM 11726).